The following is a 361-amino-acid chain: Divinyl chlorophyll a/b light-harvesting protein PcbD (361 aa).

Transmembrane regions (helical) follow at residues 27–47 (FIAS…GSTL), 93–113 (IVHL…GILF), 140–160 (FILG…VEWA), 201–221 (VMGG…FHIV), 248–268 (AVLS…AFWC), and 315–335 (LTNV…WHAL).

This sequence belongs to the PsbB/PsbC family. IsiA/Pcb subfamily. As to quaternary structure, the antenna complex consists of divinyl chlorophylls (a and b) and divinyl chlorophyll a/b binding proteins and binds more divinyl chlorophyll b than does the antenna complex from high-light-adapted Prochlorococcus. It depends on divinyl chlorophyll a as a cofactor. The cofactor is divinyl chlorophyll b.

The protein resides in the cellular thylakoid membrane. Functionally, the antenna complex functions as a light receptor, it captures and delivers excitation energy to photosystems II and I. The Prochlorales pcb genes are not related to higher plant LHCs. This is Divinyl chlorophyll a/b light-harvesting protein PcbD (pcbD) from Prochlorococcus marinus (strain SARG / CCMP1375 / SS120).